The primary structure comprises 293 residues: MSEDSQRNFRSVYYEKVGFRGVEEKKSLEILLKDDRLDIEKLCTFSQRFPLPSMYRILVWKVLLGILPHHQESHPMVMEYRREQYQDVYHALQVIHFISEATPKIEVFLYMYHLETGKLSQSQPYPMEPEDDIFLAIASTMEEMVDDDVDCYWLIRNFVNHFDSKFKDSKLQLHKAFEHYLNLEDSRLVAHLKASSALEKLPYDLWFKKCFAGCLSASSLQRVWDKLVSGSCKILVFVAVEILLTYKLKVTALNNAESINKFLEKIPEDNTDPIVSKAIDLWHKHCGIPAHSI.

One can recognise a Rab-GAP TBC domain in the interval 50–231 (PLPSMYRILV…RVWDKLVSGS (182 aa)).

Component of the TSC-TBC complex (also named Rhebulator complex), composed of 2 molecules of TSC1, 2 molecules of TSC2 and 1 molecule of TBC1D7.

Its subcellular location is the lysosome membrane. The protein resides in the cytoplasmic vesicle. The protein localises to the cytoplasm. It is found in the cytosol. Its function is as follows. Non-catalytic component of the TSC-TBC complex, a multiprotein complex that acts as a negative regulator of the canonical mTORC1 complex, an evolutionarily conserved central nutrient sensor that stimulates anabolic reactions and macromolecule biosynthesis to promote cellular biomass generation and growth. The TSC-TBC complex acts as a GTPase-activating protein (GAP) for the small GTPase RHEB, a direct activator of the protein kinase activity of mTORC1. In absence of nutrients, the TSC-TBC complex inhibits mTORC1, thereby preventing phosphorylation of ribosomal protein S6 kinase (RPS6KB1 and RPS6KB2) and EIF4EBP1 (4E-BP1) by the mTORC1 signaling. The TSC-TBC complex is inactivated in response to nutrients, relieving inhibition of mTORC1. This chain is TBC1 domain family member 7 (tbc1d7), found in Xenopus tropicalis (Western clawed frog).